The primary structure comprises 538 residues: MRHVQAEPSPSSEPEAGPSQPPVRQGALQGGLLMGYSPAGGATSPGVYQVSIFSPPAGTSEPHRALKRQAPSTEGPRELKRGPGLGAREGLPPEEPSTVGLLGPEGPGLGLGVASQHFSHRGLCVVEQRSSVTSSWTSGAWSPPCPPSNASCNTLHTRDWASPDPGGQGSLGESPGPAPPGQLHTLDTDLHSLAQIGGKSPVAGVGNGGSLWPRESPGTANGHSPEHTPPGPGPPGPCPTKRRLLPAGEAPDVSSEEEGPAPRRRRGSLGHPTAANSSDAKATPFWSHLLPGPKEPVLDPTDCGPMGRRLKGARRLKLSPLRSLRKGPGLLSPPSASPVPTPAVSRTLLGNFEESLLRGRFAPSGHIEGFTAEIGASGSYCPQHVTLPVTVTFFDVSEQNAPAPFLGIVDLNPLGRKGYSVPKVGTVQVTLFNPNQTVVKMFLVTFDFSDMPAAHMTFLRHRLFLVPVGEEGNANPTHRLLCYLLHLRFRSSRSGRLSLHGDIRLLFSRRSLELDTGLPYELQAVTEAPHNPRYSPLP.

Residues 1–18 (MRHVQAEPSPSSEPEAGP) show a composition bias toward low complexity. Disordered regions lie at residues 1 to 114 (MRHV…LGVA) and 133 to 300 (TSSW…VLDP). Positions 227–238 (HTPPGPGPPGPC) are enriched in pro residues. Serine 254 and serine 255 each carry phosphoserine. Residues 348 to 430 (LLGNFEESLL…VPKVGTVQVT (83 aa)) form a required for macropage invasion region. A transactivation domain 1 (TAD1) region spans residues 436–444 (QTVVKMFLV).

It belongs to the ATOS family.

The protein resides in the nucleus. Its function is as follows. Transcription regulator that may syncronize transcriptional and translational programs. This chain is Atos homolog protein B, found in Homo sapiens (Human).